The chain runs to 395 residues: Probable inactive serine/threonine-protein kinase DDB_G0293746 (395 aa).

The Protein kinase domain occupies 9–395 (YSEIDLISDN…ITQFIIDYLF (387 aa)). Residues 15–23 (ISDNPFKNY) and lysine 54 contribute to the ATP site. The segment at 213-266 (NSSLSSLSSSTSSSSSSSSSTNCNNNTTENNNNNYNNNNNNNNNNNNNNNNNSL) is disordered.

Belongs to the protein kinase superfamily. Ser/Thr protein kinase family.

This chain is Probable inactive serine/threonine-protein kinase DDB_G0293746, found in Dictyostelium discoideum (Social amoeba).